Here is a 275-residue protein sequence, read N- to C-terminus: Large ribosomal subunit protein uL2c (275 aa).

2 disordered regions span residues 29–60 (PEKSLTYGRHRSQGRNNRGIITSRHRGGGHKR) and 225–252 (MNPVDHPHGGGEGRAPIGRSKPVTPWGH). Residues 51–60 (SRHRGGGHKR) show a composition bias toward basic residues.

Belongs to the universal ribosomal protein uL2 family. As to quaternary structure, part of the 50S ribosomal subunit.

It is found in the plastid. It localises to the chloroplast. This is Large ribosomal subunit protein uL2c (rpl2) from Chlorokybus atmophyticus (Soil alga).